Here is a 475-residue protein sequence, read N- to C-terminus: Putative aldehyde dehydrogenase (475 aa).

NAD(+)-binding positions include 146 to 147 and 223 to 224; these read WN and GS. The active-site Proton acceptor is Glu-245. Residue Leu-246 participates in NAD(+) binding. Cys-279 (nucleophile) is an active-site residue. Glu-379 lines the NAD(+) pocket.

It belongs to the aldehyde dehydrogenase family.

The enzyme catalyses an aldehyde + NAD(+) + H2O = a carboxylate + NADH + 2 H(+). In Staphylococcus aureus (strain MSSA476), this protein is Putative aldehyde dehydrogenase.